The chain runs to 470 residues: Probable citrate synthase, mitochondrial (470 aa).

Catalysis depends on residues histidine 297, histidine 351, and aspartate 406.

Belongs to the citrate synthase family. Homodimer.

The protein localises to the mitochondrion matrix. It carries out the reaction oxaloacetate + acetyl-CoA + H2O = citrate + CoA + H(+). It functions in the pathway carbohydrate metabolism; tricarboxylic acid cycle; isocitrate from oxaloacetate: step 1/2. The chain is Probable citrate synthase, mitochondrial from Leishmania major.